Here is a 560-residue protein sequence, read N- to C-terminus: 5'-nucleotidase (560 aa).

A signal peptide spans 1–21 (MNQRLIIKTALSAAILASLAG). Residue Cys22 is the site of N-palmitoyl cysteine attachment. Residue Cys22 is the site of S-diacylglycerol cysteine attachment. The a divalent metal cation site is built by Asp45, His47, Asp88, Asn120, His221, His256, and Gln258. Substrate-binding positions include Phe432 and 501–507 (YNASGGD).

It belongs to the 5'-nucleotidase family. Chloride serves as cofactor. Requires Mg(2+) as cofactor.

Its subcellular location is the cell outer membrane. The catalysed reaction is a ribonucleoside 5'-phosphate + H2O = a ribonucleoside + phosphate. Its function is as follows. Degradation of extracellular 5'-nucleotides for nutritional needs. This is 5'-nucleotidase (nutA) from Vibrio parahaemolyticus serotype O3:K6 (strain RIMD 2210633).